The chain runs to 362 residues: uncharacterized protein (362 aa).

3 disordered regions span residues 1-117, 153-172, and 210-266; these read MASK…GLNR, SSAP…GIRK, and RHFD…SSSN. Basic and acidic residues predominate over residues 12 to 23; that stretch reads AKKEKEIKKEIE. Over residues 51-70 the composition is skewed to acidic residues; sequence ENDDTDGDGKEEDAQKEDDI. Low complexity-rich tracts occupy residues 100–112, 153–167, and 241–265; these read NSPP…TRNT, SSAP…GSPS, and VPPS…TSSS.

This is an uncharacterized protein from Caenorhabditis elegans.